Consider the following 329-residue polypeptide: COMPASS component SWD2 (329 aa).

WD repeat units follow at residues 25–64, 111–150, 152–191, 199–238, 246–287, and 298–328; these read KDCGPVTSLNFDDNGQFLLTSSSNDTMQLYSATNCKFLDT, GHGALVNDLKMNPVNDTFLSSSYDESVRLWDLKISKPQVI, PSLVPNCIAYDPSGLVFALGNPENFEIGLYNLKKIQEGPF, ATFSQWNKLEFSNNGKYLLVGSSIGKHLIFDAFTGQQLFE, PMRE…SNKV, and SHETCPRSIAFNPKYSMFVTADETVDFYVYD.

Belongs to the WD repeat SWD2 family. Component of the Set1C/COMPASS complex which consists of SET1(2), BRE2(2), SPP1(2), SDC1(1), SHG1(1), SWD1(1), SWD2(1), and SWD3(1). Component of the cleavage and polyadenylation factor (CPF) complex, which is composed of PTI1, SYC1, SSU72, GLC7, MPE1, REF2, PFS2, PTA1, YSH1/BRR5, SWD2, CFT2/YDH1, YTH1, CFT1/YHH1, FIP1 and PAP1. Component of the APT complex, which is a subcomplex of CPF, and is composed of PTI1, SYC1, SSU72, GLC7, REF2, PTA1 and SWD2.

It is found in the nucleus. The protein localises to the chromosome. The protein resides in the telomere. In terms of biological role, the COMPASS (Set1C) complex specifically mono-, di- and trimethylates histone H3 to form H3K4me1/2/3, which subsequently plays a role in telomere length maintenance and transcription elongation regulation. Its function is as follows. Involved in mediating RNA polymerase II termination. Component of the cleavage and polyadenylation factor (CPF) complex, which plays a key role in polyadenylation-dependent pre-mRNA 3'-end formation and cooperates with cleavage factors including the CFIA complex and NAB4/CFIB. Component of the APT complex, which may be involved in polyadenylation-independent transcript 3'-end formation. The protein is COMPASS component SWD2 (SWD2) of Saccharomyces cerevisiae (strain ATCC 204508 / S288c) (Baker's yeast).